The primary structure comprises 314 residues: Porphobilinogen deaminase (314 aa).

Cysteine 242 carries the post-translational modification S-(dipyrrolylmethanemethyl)cysteine.

It belongs to the HMBS family. In terms of assembly, monomer. It depends on dipyrromethane as a cofactor.

It carries out the reaction 4 porphobilinogen + H2O = hydroxymethylbilane + 4 NH4(+). It functions in the pathway porphyrin-containing compound metabolism; protoporphyrin-IX biosynthesis; coproporphyrinogen-III from 5-aminolevulinate: step 2/4. Tetrapolymerization of the monopyrrole PBG into the hydroxymethylbilane pre-uroporphyrinogen in several discrete steps. The sequence is that of Porphobilinogen deaminase (hemC) from Bacillus subtilis (strain 168).